A 463-amino-acid chain; its full sequence is Asparagine--tRNA ligase (463 aa).

Belongs to the class-II aminoacyl-tRNA synthetase family. In terms of assembly, homodimer.

The protein resides in the cytoplasm. It catalyses the reaction tRNA(Asn) + L-asparagine + ATP = L-asparaginyl-tRNA(Asn) + AMP + diphosphate + H(+). This Clostridium novyi (strain NT) protein is Asparagine--tRNA ligase.